The primary structure comprises 444 residues: MGPGIQPTSARPCSRTKHSRFALLAAALTARRVKQFTKQFRSRRMAEDILKLWQRQYHLPREDSDKRTLRERVHLYRPPRSDLGGIAVAVTVIALWATLFVYGLWFVKLPWALKVGETATSWATIAAVFFSLEFLYTGLFITTHDAMHGTIALRNRRLNDFLGQLAISLYAWFDYSVLHRKHWEHHNHTGEPRVDPDFHRGNPNLAVWFAQFMVSYMTLSQFLKIAVWSNLLLLAGAPLANQLLFMTAAPILSAFRLFYYGTYVPHHPEKGHTGAMPWQVSRTSSASRLQSFLTCYHFDLHWEHHRWPYAPWWELPKCRQIARGAALAPGPLPVPAAAAATAATAAAAAAATGSPAPASRAGSASSASAAASGFGSGHSGSVAAQPLSSLPLLSEGVKGLVEGAMELVAGGSSSGGGGEGGKPGAGEHGLLQRQRQLAPVGVMA.

The tract at residues 408–444 (VAGGSSSGGGGEGGKPGAGEHGLLQRQRQLAPVGVMA) is disordered. Residues 412-427 (SSSGGGGEGGKPGAGE) show a composition bias toward gly residues.

It carries out the reaction all-trans-adonixanthin + 2 AH2 + 2 O2 = all-trans-(3S,3'S)-astaxanthin + 2 A + 3 H2O. The enzyme catalyses all-trans-zeaxanthin + 2 AH2 + 2 O2 = all-trans-adonixanthin + 2 A + 3 H2O. It catalyses the reaction echinenone + 2 AH2 + 2 O2 = canthaxanthin + 2 A + 3 H2O. The catalysed reaction is all-trans-beta-carotene + 2 AH2 + 2 O2 = echinenone + 2 A + 3 H2O. Its pathway is carotenoid biosynthesis; astaxanthin biosynthesis. Functionally, involved in the biosynthesis of ketocarotenoids which are powerful anti-oxidative molecules. Catalyzes the conversion of zeaxanthin to astaxanthin via adonixanthin. Catalyzes the conversion of beta-carotene to canthaxanthin via echinenone. The chain is Zeaxanthin 4-ketolase from Chlamydomonas reinhardtii (Chlamydomonas smithii).